We begin with the raw amino-acid sequence, 335 residues long: Methylthioribose-1-phosphate isomerase (335 aa).

Substrate contacts are provided by residues 47–49 (RGA), R81, and Q184. D225 (proton donor) is an active-site residue. 235 to 236 (NK) lines the substrate pocket.

This sequence belongs to the eIF-2B alpha/beta/delta subunits family. MtnA subfamily.

The catalysed reaction is 5-(methylsulfanyl)-alpha-D-ribose 1-phosphate = 5-(methylsulfanyl)-D-ribulose 1-phosphate. Its pathway is amino-acid biosynthesis; L-methionine biosynthesis via salvage pathway; L-methionine from S-methyl-5-thio-alpha-D-ribose 1-phosphate: step 1/6. Functionally, catalyzes the interconversion of methylthioribose-1-phosphate (MTR-1-P) into methylthioribulose-1-phosphate (MTRu-1-P). This is Methylthioribose-1-phosphate isomerase from Synechococcus sp. (strain CC9902).